The primary structure comprises 669 residues: Probable ferric reductase transmembrane component (669 aa).

Positions 17–86 are disordered; the sequence is FKTNGTEYAK…SGKGNSGTST (70 aa). N-linked (GlcNAc...) asparagine glycosylation is found at asparagine 20, asparagine 52, asparagine 64, and asparagine 116. Positions 28-86 are enriched in low complexity; it reads TTKSSSGSKTSTSASKSSKSTGSSNASKSSTNAHGSNSSTSSTSSSSSKSGKGNSGTST. Residues 122–142 form a helical membrane-spanning segment; the sequence is GSGLLGYWAGILAIAIFANMI. Residue asparagine 152 is glycosylated (N-linked (GlcNAc...) asparagine). Transmembrane regions (helical) follow at residues 198-218, 234-254, 281-301, 313-333, and 340-360; these read IIVV…IHHV, LIAD…ILFG, VDVL…KATG, IWGT…MLFF, and VFFL…YYHL. Residues 239-373 enclose the Ferric oxidoreductase domain; it reads TGILGTFLIP…GYGDFMWAAI (135 aa). The 119-residue stretch at 374–492 folds into the FAD-binding FR-type domain; the sequence is AVWAFDRVVR…EGPYGEPSSA (119 aa). 437–442 lines the FAD pocket; the sequence is HPFTFT. Residues 499–519 traverse the membrane as a helical segment; that stretch reads VVFVAGGNGIPGIYSECVDLA. N-linked (GlcNAc...) asparagine glycosylation is found at asparagine 524 and asparagine 653.

It belongs to the ferric reductase (FRE) family. Requires FAD as cofactor.

The protein localises to the membrane. The catalysed reaction is 2 a Fe(II)-siderophore + NAD(+) + H(+) = 2 a Fe(III)-siderophore + NADH. This chain is Probable ferric reductase transmembrane component (CFL1), found in Candida albicans (Yeast).